Consider the following 401-residue polypeptide: Leucine aminopeptidase 1 (401 aa).

The N-terminal stretch at 1 to 18 (MKVAKASLLTILAHSVSA) is a signal peptide. Positions 19-87 (RFLAEDEINR…GATRLRTKTK (69 aa)) are excised as a propeptide. Asparagine 179 is a glycosylation site (N-linked (GlcNAc...) asparagine). The Zn(2+) site is built by histidine 187, aspartate 206, glutamate 245, and aspartate 272. The cysteines at positions 321 and 325 are disulfide-linked. A Zn(2+)-binding site is contributed by histidine 354.

It belongs to the peptidase M28 family. M28E subfamily. As to quaternary structure, monomer. It depends on Zn(2+) as a cofactor.

The protein localises to the secreted. In terms of biological role, extracellular aminopeptidase that allows assimilation of proteinaceous substrates. This is Leucine aminopeptidase 1 (LAP1) from Colletotrichum graminicola (strain M1.001 / M2 / FGSC 10212) (Maize anthracnose fungus).